The chain runs to 277 residues: Large ribosomal subunit protein uL2 (277 aa).

The segment at 220-277 is disordered; it reads VRGSVMNPNDHPHGGGEGKAPIGRPSPMSPWGKKTLGKKTRSSKARSEKLIIRHRKSR. Positions 254 to 263 are enriched in basic residues; sequence TLGKKTRSSK.

Belongs to the universal ribosomal protein uL2 family. In terms of assembly, part of the 50S ribosomal subunit. Forms a bridge to the 30S subunit in the 70S ribosome.

One of the primary rRNA binding proteins. Required for association of the 30S and 50S subunits to form the 70S ribosome, for tRNA binding and peptide bond formation. It has been suggested to have peptidyltransferase activity; this is somewhat controversial. Makes several contacts with the 16S rRNA in the 70S ribosome. In Latilactobacillus sakei subsp. sakei (strain 23K) (Lactobacillus sakei subsp. sakei), this protein is Large ribosomal subunit protein uL2.